The sequence spans 210 residues: Cilia- and flagella-associated protein 418 (210 aa).

The tract at residues 1-77 (MAKDLDELLD…LINEIFEEPN (77 aa)) is required for interaction with FAM161A. The segment at 24–59 (LDLGERPKGGSGGGGTHSGDRNGAQEKDTLRSTETF) is disordered. Residues 41-59 (SGDRNGAQEKDTLRSTETF) show a composition bias toward basic and acidic residues.

Interacts (via N-terminus) with FAM161A (via central region); the interaction is direct.

Its subcellular location is the cytoplasm. The protein localises to the photoreceptor inner segment. Functionally, may be involved in photoreceptor outer segment disk morphogenesis. The chain is Cilia- and flagella-associated protein 418 from Rattus norvegicus (Rat).